The primary structure comprises 309 residues: Wall-associated proteinase (309 aa).

Residues asparagine 190 and asparagine 295 are each glycosylated (N-linked (GlcNAc...) asparagine).

The protein localises to the secreted. It localises to the cell wall. The protein resides in the membrane. In terms of biological role, may participate in wall plasticization and/or intussusception or in cell wall turnover. The chain is Wall-associated proteinase from Coccidioides immitis (strain RS) (Valley fever fungus).